A 194-amino-acid polypeptide reads, in one-letter code: 3-isopropylmalate dehydratase small subunit (194 aa).

The protein belongs to the LeuD family. LeuD type 1 subfamily. In terms of assembly, heterodimer of LeuC and LeuD.

It carries out the reaction (2R,3S)-3-isopropylmalate = (2S)-2-isopropylmalate. Its pathway is amino-acid biosynthesis; L-leucine biosynthesis; L-leucine from 3-methyl-2-oxobutanoate: step 2/4. In terms of biological role, catalyzes the isomerization between 2-isopropylmalate and 3-isopropylmalate, via the formation of 2-isopropylmaleate. The sequence is that of 3-isopropylmalate dehydratase small subunit from Leuconostoc mesenteroides subsp. mesenteroides (strain ATCC 8293 / DSM 20343 / BCRC 11652 / CCM 1803 / JCM 6124 / NCDO 523 / NBRC 100496 / NCIMB 8023 / NCTC 12954 / NRRL B-1118 / 37Y).